Reading from the N-terminus, the 395-residue chain is MFRRIFLFDEDSLNSSVTSYTNASQSTTTIMDYSLKSSDTQGSSSGIFTDHPGLNPCSERIVELQYDIRLKLGALMPKESAQKVLEASEALHGESNNIAFLEYLLEDLQQNGVGGEAYKDAVDLSKDLVSSPLEQFEIISLIPMKIGNLYFSFTNPSLFMLLTLSLVLLLVYFVTKKGGGNSVPNAWQSLVELIYDFVLNPVNEQIGGLSGNVKQKFSPRISVTFTFSLFCNPQGMIPYSFTVTSHFLITLGLSFSIFIGITIVGFQKNGLHFLSFLLPAGVPLPLAPFLVLLELIPYCFRALSSGIRLFANMMAGHSSVKILSGFAWTMLCMNDLLYFIGDLGPLFIVLALTGLELGVAISQAHVSTILICIYLNDAINLHQSASFFIIEQKRV.

5 helical membrane passes run 153–173, 246–266, 273–293, 313–333, and 339–359; these read FTNP…LVYF, HFLI…IVGF, FLSF…LVLL, MMAG…MLCM, and FIGD…ELGV.

It belongs to the ATPase A chain family. F-type ATPases have 2 components, CF(1) - the catalytic core - and CF(0) - the membrane proton channel. CF(1) has five subunits: alpha(3), beta(3), gamma(1), delta(1), epsilon(1). CF(0) has three main subunits: a, b and c.

The protein resides in the mitochondrion inner membrane. Functionally, mitochondrial membrane ATP synthase (F(1)F(0) ATP synthase or Complex V) produces ATP from ADP in the presence of a proton gradient across the membrane which is generated by electron transport complexes of the respiratory chain. F-type ATPases consist of two structural domains, F(1) - containing the extramembraneous catalytic core and F(0) - containing the membrane proton channel, linked together by a central stalk and a peripheral stalk. During catalysis, ATP synthesis in the catalytic domain of F(1) is coupled via a rotary mechanism of the central stalk subunits to proton translocation. Key component of the proton channel; it may play a direct role in the translocation of protons across the membrane. This is ATP synthase subunit a (ATP6) from Nicotiana tabacum (Common tobacco).